The sequence spans 573 residues: Mucin-13 (573 aa).

The first 17 residues, 1 to 17 (MKGFLLLSLSLLLVTVG), serve as a signal peptide directing secretion. Residues 16 to 234 (VGSSSQASST…VPSGGSTGPS (219 aa)) show a composition bias toward low complexity. Residues 16 to 237 (VGSSSQASST…GGSTGPSDLC (222 aa)) form a disordered region. The Extracellular segment spans residues 18–480 (SSSQASSTTS…FGYSGMNCKD (463 aa)). Residues 233–273 (PSDLCNPNPCKGTASCVKLHSKHFCLCLEGYYYNSSLSSCV) form the EGF-like 1 domain. Disulfide bonds link C237-C248, C242-C257, and C259-C272. Residues N266, N316, and N397 are each glycosylated (N-linked (GlcNAc...) asparagine). One can recognise an SEA domain in the interval 274–391 (KGTTFPGDIS…DYVSINLCDH (118 aa)). EGF-like domains follow at residues 385 to 425 (SINL…PFCV) and 425 to 467 (VAVT…RKCE). Intrachain disulfides connect C389–C402, C394–C408, C410–C424, C429–C441, C433–C451, and C453–C466. Residues 481-508 (QFQLILTIVGTIAGALILILLIAFIVSA) form a helical membrane-spanning segment. Residues 509–573 (RSKNKKKDGE…NQRSMPRPDY (65 aa)) are Cytoplasmic-facing. The disordered stretch occupies residues 548-573 (PKVRTGVPSQTPNPYANQRSMPRPDY). Over residues 554-567 (VPSQTPNPYANQRS) the composition is skewed to polar residues.

Homodimer of beta subunits. Cleaved into two subunits, alpha and beta, probably between the first EGF domain and the SEA domain. Beta subunit contains the cytoplasmic tail and alpha subunit the extracellular tail. The homooligomerization into dimers is dependent on intrachain disulfide bonds. Post-translationally, highly N-glycosylated.

It is found in the cell membrane. Its subcellular location is the secreted. In terms of biological role, epithelial and hemopoietic transmembrane mucin that may play a role in cell signaling. This Mus musculus (Mouse) protein is Mucin-13 (Muc13).